Reading from the N-terminus, the 345-residue chain is Anthranilate phosphoribosyltransferase (345 aa).

5-phospho-alpha-D-ribose 1-diphosphate is bound by residues Gly-86, 89 to 90, Thr-94, 96 to 99, 114 to 122, and Ser-126; these read GD, NIST, and KHGGRGVSS. Gly-86 contacts anthranilate. Ser-98 provides a ligand contact to Mg(2+). Position 172 (Arg-172) interacts with anthranilate. Residues Asp-231 and Glu-232 each coordinate Mg(2+).

This sequence belongs to the anthranilate phosphoribosyltransferase family. Homodimer. Mg(2+) is required as a cofactor.

The enzyme catalyses N-(5-phospho-beta-D-ribosyl)anthranilate + diphosphate = 5-phospho-alpha-D-ribose 1-diphosphate + anthranilate. It participates in amino-acid biosynthesis; L-tryptophan biosynthesis; L-tryptophan from chorismate: step 2/5. In terms of biological role, catalyzes the transfer of the phosphoribosyl group of 5-phosphorylribose-1-pyrophosphate (PRPP) to anthranilate to yield N-(5'-phosphoribosyl)-anthranilate (PRA). This is Anthranilate phosphoribosyltransferase from Ralstonia pickettii (strain 12J).